The following is a 138-amino-acid chain: Putative pre-16S rRNA nuclease (138 aa).

The protein belongs to the YqgF nuclease family.

It is found in the cytoplasm. Could be a nuclease involved in processing of the 5'-end of pre-16S rRNA. This is Putative pre-16S rRNA nuclease from Glaesserella parasuis serovar 5 (strain SH0165) (Haemophilus parasuis).